A 453-amino-acid chain; its full sequence is Frizzled/smoothened-like sans CRD protein G (453 aa).

Residues Met1–Ser24 form the signal peptide. At Gln25 to Lys89 the chain is on the extracellular side. N-linked (GlcNAc...) asparagine glycosylation is found at Asn49 and Asn67. A helical transmembrane segment spans residues Phe90–Ile110. Topologically, residues Thr111–Thr124 are cytoplasmic. Residues Ile125–Phe145 form a helical membrane-spanning segment. The Extracellular portion of the chain corresponds to Gly146–Cys170. N-linked (GlcNAc...) asparagine glycosylation occurs at Asn148. Residues Leu171–Leu191 traverse the membrane as a helical segment. Topologically, residues Ser192–Lys209 are cytoplasmic. Residues Tyr210 to Asp230 traverse the membrane as a helical segment. The Extracellular portion of the chain corresponds to Gln231–Leu250. A helical transmembrane segment spans residues Ile251–Ile271. Over Leu272–Leu296 the chain is Cytoplasmic. A helical membrane pass occupies residues Cys297–Ile317. The Extracellular portion of the chain corresponds to Glu318–Asn352. The chain crosses the membrane as a helical span at residues Glu353–Ile373. The Cytoplasmic portion of the chain corresponds to Asn374–Lys453.

This sequence belongs to the G-protein coupled receptor Fz/Smo family.

It localises to the membrane. This is Frizzled/smoothened-like sans CRD protein G (fscG) from Dictyostelium discoideum (Social amoeba).